The following is a 37-amino-acid chain: Large ribosomal subunit protein bL36 (37 aa).

The protein belongs to the bacterial ribosomal protein bL36 family.

This is Large ribosomal subunit protein bL36 from Trichodesmium erythraeum (strain IMS101).